A 108-amino-acid polypeptide reads, in one-letter code: uncharacterized protein (108 aa).

Residues 72 to 94 (LGLHTSVFFFLRIVCMSSAASVF) form a helical membrane-spanning segment.

Its subcellular location is the membrane. This is an uncharacterized protein from Saccharomyces cerevisiae (strain ATCC 204508 / S288c) (Baker's yeast).